The sequence spans 123 residues: Large ribosomal subunit protein uL29 (123 aa).

The protein belongs to the universal ribosomal protein uL29 family. In terms of assembly, component of the large ribosomal subunit.

It is found in the cytoplasm. Its function is as follows. Component of the large ribosomal subunit. The ribosome is a large ribonucleoprotein complex responsible for the synthesis of proteins in the cell. The sequence is that of Large ribosomal subunit protein uL29 (rpl35) from Ictalurus punctatus (Channel catfish).